Here is a 219-residue protein sequence, read N- to C-terminus: 7-cyano-7-deazaguanine synthase (219 aa).

An ATP-binding site is contributed by 10–20; it reads FSGGQDSTTCL. Residues C186, C195, C198, and C201 each coordinate Zn(2+).

It belongs to the QueC family. Homodimer. Zn(2+) is required as a cofactor.

The enzyme catalyses 7-carboxy-7-deazaguanine + NH4(+) + ATP = 7-cyano-7-deazaguanine + ADP + phosphate + H2O + H(+). The protein operates within purine metabolism; 7-cyano-7-deazaguanine biosynthesis. In terms of biological role, catalyzes the ATP-dependent conversion of 7-carboxy-7-deazaguanine (CDG) to 7-cyano-7-deazaguanine (preQ(0)). This is 7-cyano-7-deazaguanine synthase from Bacillus velezensis (strain DSM 23117 / BGSC 10A6 / LMG 26770 / FZB42) (Bacillus amyloliquefaciens subsp. plantarum).